A 642-amino-acid chain; its full sequence is Arginine--tRNA ligase, chloroplastic/mitochondrial (642 aa).

The N-terminal 53 residues, 1–53 (MFIFPKDENRRETLTTKLRFSADHLTFTTVTEKLRATAWRFAFSSRAKSVVAM), are a transit peptide targeting the chloroplast and mitochondrion. At Ala-54 the chain carries N-acetylalanine. The short motif at 190-201 (PNIAKEMHVGHL) is the 'HIGH' region element.

It belongs to the class-I aminoacyl-tRNA synthetase family.

The protein resides in the plastid. The protein localises to the chloroplast. It localises to the mitochondrion. It carries out the reaction tRNA(Arg) + L-arginine + ATP = L-arginyl-tRNA(Arg) + AMP + diphosphate. Its function is as follows. Forms part of a macromolecular complex that catalyzes the attachment of specific amino acids to cognate tRNAs during protein synthesis. The polypeptide is Arginine--tRNA ligase, chloroplastic/mitochondrial (Arabidopsis thaliana (Mouse-ear cress)).